The following is a 152-amino-acid chain: UPF0178 protein YaiI (152 aa).

Belongs to the UPF0178 family.

The polypeptide is UPF0178 protein YaiI (Shigella flexneri).